Reading from the N-terminus, the 162-residue chain is Ribosome maturation factor RimP (162 aa).

The protein belongs to the RimP family.

It is found in the cytoplasm. Its function is as follows. Required for maturation of 30S ribosomal subunits. The chain is Ribosome maturation factor RimP from Cupriavidus metallidurans (strain ATCC 43123 / DSM 2839 / NBRC 102507 / CH34) (Ralstonia metallidurans).